A 132-amino-acid chain; its full sequence is MIVRNLTEARDSNRRIVSPDGNWESTRMLLKDDKMGFSFHITTIYKGADFRMHYQNHLESVYCVRGRGEVETLADGKKYPIEPGTLYILDKHDEHMLRAFEEMEMACVFNPPLNGTEVHNAEGAYELNAEAL.

It belongs to the ectoine synthase family.

It carries out the reaction (2S)-4-acetamido-2-aminobutanoate = L-ectoine + H2O. The protein operates within amine and polyamine biosynthesis; ectoine biosynthesis; L-ectoine from L-aspartate 4-semialdehyde: step 3/3. Functionally, catalyzes the circularization of gamma-N-acetyl-alpha,gamma-diaminobutyric acid (ADABA) to ectoine (1,4,5,6-tetrahydro-2-methyl-4-pyrimidine carboxylic acid), which is an excellent osmoprotectant. This chain is L-ectoine synthase, found in Teredinibacter turnerae (strain ATCC 39867 / T7901).